We begin with the raw amino-acid sequence, 429 residues long: Enolase (429 aa).

(2R)-2-phosphoglycerate is bound at residue Gln-168. The active-site Proton donor is Glu-210. Residues Asp-247, Glu-288, and Asp-315 each contribute to the Mg(2+) site. (2R)-2-phosphoglycerate is bound by residues Lys-340, Arg-369, Ser-370, and Lys-391. The active-site Proton acceptor is the Lys-340.

This sequence belongs to the enolase family. Mg(2+) serves as cofactor.

It is found in the cytoplasm. It localises to the secreted. Its subcellular location is the cell surface. It carries out the reaction (2R)-2-phosphoglycerate = phosphoenolpyruvate + H2O. It functions in the pathway carbohydrate degradation; glycolysis; pyruvate from D-glyceraldehyde 3-phosphate: step 4/5. Its function is as follows. Catalyzes the reversible conversion of 2-phosphoglycerate (2-PG) into phosphoenolpyruvate (PEP). It is essential for the degradation of carbohydrates via glycolysis. This is Enolase from Nostoc sp. (strain PCC 7120 / SAG 25.82 / UTEX 2576).